The sequence spans 78 residues: Small ribosomal subunit protein uS19m (78 aa).

The protein belongs to the universal ribosomal protein uS19 family.

The protein localises to the mitochondrion. In Acanthamoeba castellanii (Amoeba), this protein is Small ribosomal subunit protein uS19m (RPS19).